The chain runs to 585 residues: uncharacterized protein (585 aa).

This is an uncharacterized protein from Escherichia coli (strain K12).